A 308-amino-acid chain; its full sequence is L-lactate dehydrogenase 2 (308 aa).

Residues V14, D35, Y65, and 79 to 80 (GA) each bind NAD(+). R88 serves as a coordination point for substrate. S101 provides a ligand contact to NAD(+). 120–123 (NPVD) provides a ligand contact to substrate. T143 is an NAD(+) binding site. 148-151 (DTAR) lines the substrate pocket. Residue H175 is the Proton acceptor of the active site. T225 provides a ligand contact to substrate.

The protein belongs to the LDH/MDH superfamily. LDH family. Homotetramer.

It is found in the cytoplasm. It carries out the reaction (S)-lactate + NAD(+) = pyruvate + NADH + H(+). The protein operates within fermentation; pyruvate fermentation to lactate; (S)-lactate from pyruvate: step 1/1. Its function is as follows. Catalyzes the conversion of lactate to pyruvate. The polypeptide is L-lactate dehydrogenase 2 (Lactobacillus johnsonii (strain CNCM I-12250 / La1 / NCC 533)).